We begin with the raw amino-acid sequence, 251 residues long: Hydroxyacylglutathione hydrolase GloB (251 aa).

Zn(2+)-binding residues include histidine 53, histidine 55, aspartate 57, histidine 58, histidine 110, and aspartate 127. Substrate-binding positions include 136–138 (RLF), 165–167 (HEY), and 245–248 (RSKK). Histidine 165 provides a ligand contact to Zn(2+).

This sequence belongs to the metallo-beta-lactamase superfamily. Glyoxalase II family. In terms of assembly, monomer. It depends on Zn(2+) as a cofactor.

The enzyme catalyses an S-(2-hydroxyacyl)glutathione + H2O = a 2-hydroxy carboxylate + glutathione + H(+). It carries out the reaction (R)-S-lactoylglutathione + H2O = (R)-lactate + glutathione + H(+). It participates in secondary metabolite metabolism; methylglyoxal degradation; (R)-lactate from methylglyoxal: step 2/2. With respect to regulation, is inhibited by Cu(2+). Type II glyoxalase that catalyzes the hydrolysis of (R)-S-lactoylglutathione to (R)-lactate and glutathione. Is more efficient than the isozyme GloC, and plays a major contribution to methylglyoxal (MG) detoxification in E.coli. The two isoenzymes have additive effects and ensure maximal MG degradation. This is Hydroxyacylglutathione hydrolase GloB from Escherichia coli (strain K12).